Consider the following 336-residue polypeptide: Fructose-1,6-bisphosphatase class 1 (336 aa).

Residues E98, D117, L119, and D120 each contribute to the Mg(2+) site. Residues 120–123, N210, and K276 each bind substrate; that span reads DGSS. Mg(2+) is bound at residue E282.

Belongs to the FBPase class 1 family. As to quaternary structure, homotetramer. Mg(2+) serves as cofactor.

It localises to the cytoplasm. The enzyme catalyses beta-D-fructose 1,6-bisphosphate + H2O = beta-D-fructose 6-phosphate + phosphate. It participates in carbohydrate biosynthesis; gluconeogenesis. The polypeptide is Fructose-1,6-bisphosphatase class 1 (Caulobacter vibrioides (strain ATCC 19089 / CIP 103742 / CB 15) (Caulobacter crescentus)).